Here is a 158-residue protein sequence, read N- to C-terminus: MLP-like protein 43 (158 aa).

Ala-2 carries the post-translational modification N-acetylalanine.

Belongs to the MLP family.

The sequence is that of MLP-like protein 43 (MLP43) from Arabidopsis thaliana (Mouse-ear cress).